The primary structure comprises 350 residues: 4-hydroxy-2-oxovalerate aldolase 3 (350 aa).

A Pyruvate carboxyltransferase domain is found at 13–265 (VVFHDMCLRD…DTGVDLFRLM (253 aa)). Position 21–22 (21–22 (RD)) interacts with substrate. Aspartate 22 is a Mn(2+) binding site. Histidine 25 (proton acceptor) is an active-site residue. Substrate is bound by residues serine 175 and histidine 204. Positions 204 and 206 each coordinate Mn(2+). A substrate-binding site is contributed by tyrosine 295.

The protein belongs to the 4-hydroxy-2-oxovalerate aldolase family.

The catalysed reaction is (S)-4-hydroxy-2-oxopentanoate = acetaldehyde + pyruvate. The sequence is that of 4-hydroxy-2-oxovalerate aldolase 3 (lapG) from Azotobacter vinelandii (strain DJ / ATCC BAA-1303).